Consider the following 256-residue polypeptide: MAVGKNKRLSKGKKGLKKKTQDPFARKDWYGIKAPAPFNIRDVGKTLVNRSSGMKNANDALKGRIFEVSLADLQKDEDHAFRKIKLRVDEVQGKNCLTNFHGLDFTSDKLRSLVRKWQSLIEANVTVKTTDDYLLRLFAIAFTKRRPNQIKKTTYAASSQIRAIRRKMTEIIQREASTCTLQQLTNKLIPEVIGREIEKATQGIYPLQNVHIRKVKLLKQPKFDLGGLLALHGESTTDEQGQKVEREFKERVLEEV.

Residues 1–18 are compositionally biased toward basic residues; it reads MAVGKNKRLSKGKKGLKK. Positions 1–22 are disordered; that stretch reads MAVGKNKRLSKGKKGLKKKTQD. A2 carries the post-translational modification N-acetylalanine; partial.

This sequence belongs to the eukaryotic ribosomal protein eS1 family. In terms of assembly, component of the small ribosomal subunit. Mature ribosomes consist of a small (40S) and a large (60S) subunit. The 40S subunit contains about 33 different proteins and 1 molecule of RNA (18S). The 60S subunit contains about 49 different proteins and 3 molecules of RNA (25S, 5.8S and 5S).

It localises to the cytoplasm. In Pyricularia oryzae (strain Y34) (Rice blast fungus), this protein is Small ribosomal subunit protein eS1.